A 238-amino-acid chain; its full sequence is Ribitol-5-phosphate cytidylyltransferase 2 (238 aa).

CTP is bound by residues 7–10 (LAGG) and 81–87 (GTDRNET).

Belongs to the IspD/TarI cytidylyltransferase family. TarI subfamily.

It catalyses the reaction D-ribitol 5-phosphate + CTP + H(+) = CDP-L-ribitol + diphosphate. It participates in cell wall biogenesis; poly(ribitol phosphate) teichoic acid biosynthesis. Catalyzes the transfer of the cytidylyl group of CTP to D-ribitol 5-phosphate. This Staphylococcus aureus (strain MSSA476) protein is Ribitol-5-phosphate cytidylyltransferase 2.